Consider the following 190-residue polypeptide: Segregation and condensation protein B (190 aa).

This sequence belongs to the ScpB family. As to quaternary structure, homodimer. Homodimerization may be required to stabilize the binding of ScpA to the Smc head domains. Component of a cohesin-like complex composed of ScpA, ScpB and the Smc homodimer, in which ScpA and ScpB bind to the head domain of Smc. The presence of the three proteins is required for the association of the complex with DNA.

The protein resides in the cytoplasm. Its function is as follows. Participates in chromosomal partition during cell division. May act via the formation of a condensin-like complex containing Smc and ScpA that pull DNA away from mid-cell into both cell halves. The sequence is that of Segregation and condensation protein B from Bacillus cereus (strain AH187).